Consider the following 325-residue polypeptide: MQNSLLKPRIIEVEVLGAGHAKVVMEPFERGYGHTLGNALRRVLLSSMVGYAPTEVTIAGVVHEYSSLDGVQEDVVDLLLNLKGVVFKLHNRDDVTLTLKKDGEGAVLASDIELPHDVELVNPDHVIAHLTAGGKLDMQIKVEKGRGYVPGNVRRLSEDTNKTIGRIILDASFSPVRRVSYAVESARVEQRTDLDKLVINIETNGVISPEEAIRQSARVLVDQLNVFAALEGTEAPADAPSRAPAVDPILLRPVDDLELTVRSANCLKAENIYYIGDLIQRSENELLKTPNLGRKSLNEIKEVLASRGLTLGMKLENWPPAGLEK.

Residues methionine 1–glutamate 231 form an alpha N-terminal domain (alpha-NTD) region. An alpha C-terminal domain (alpha-CTD) region spans residues valine 246–lysine 325.

This sequence belongs to the RNA polymerase alpha chain family. Homodimer. The RNAP catalytic core consists of 2 alpha, 1 beta, 1 beta' and 1 omega subunit. When a sigma factor is associated with the core the holoenzyme is formed, which can initiate transcription.

The enzyme catalyses RNA(n) + a ribonucleoside 5'-triphosphate = RNA(n+1) + diphosphate. Functionally, DNA-dependent RNA polymerase catalyzes the transcription of DNA into RNA using the four ribonucleoside triphosphates as substrates. The chain is DNA-directed RNA polymerase subunit alpha from Janthinobacterium sp. (strain Marseille) (Minibacterium massiliensis).